Here is a 253-residue protein sequence, read N- to C-terminus: Rab GTPase-activating protein 1-like, isoform 10 (253 aa).

Residues 8–222 (SMTFEERENR…MNEIQAAKNS (215 aa)) are a coiled coil. Residues 233-253 (TATGTQPLQPAPVTQPPKEST) are disordered.

The chain is Rab GTPase-activating protein 1-like, isoform 10 (RABGAP1L) from Homo sapiens (Human).